Consider the following 435-residue polypeptide: Serine hydroxymethyltransferase (435 aa).

Residues L133 and 137–139 contribute to the (6S)-5,6,7,8-tetrahydrofolate site; that span reads GHL. K242 is modified (N6-(pyridoxal phosphate)lysine).

It belongs to the SHMT family. As to quaternary structure, homodimer. The cofactor is pyridoxal 5'-phosphate.

The protein resides in the cytoplasm. The enzyme catalyses (6R)-5,10-methylene-5,6,7,8-tetrahydrofolate + glycine + H2O = (6S)-5,6,7,8-tetrahydrofolate + L-serine. The protein operates within one-carbon metabolism; tetrahydrofolate interconversion. It functions in the pathway amino-acid biosynthesis; glycine biosynthesis; glycine from L-serine: step 1/1. Its function is as follows. Catalyzes the reversible interconversion of serine and glycine with tetrahydrofolate (THF) serving as the one-carbon carrier. This reaction serves as the major source of one-carbon groups required for the biosynthesis of purines, thymidylate, methionine, and other important biomolecules. Also exhibits THF-independent aldolase activity toward beta-hydroxyamino acids, producing glycine and aldehydes, via a retro-aldol mechanism. The chain is Serine hydroxymethyltransferase from Hyphomonas neptunium (strain ATCC 15444).